A 193-amino-acid chain; its full sequence is uncharacterized protein (193 aa).

The interval 158-193 (YNPIYDDHNPLPPEKKKSILSRTRSTKLSSGEITPV) is disordered. Positions 162–174 (YDDHNPLPPEKKK) are enriched in basic and acidic residues. The segment covering 177 to 193 (LSRTRSTKLSSGEITPV) has biased composition (polar residues).

This is an uncharacterized protein from Micromonas pusilla (Picoplanktonic green alga).